The chain runs to 393 residues: Dual-specificity RNA methyltransferase RlmN (393 aa).

Glu114 functions as the Proton acceptor in the catalytic mechanism. The Radical SAM core domain maps to 120-359 (EDDRATLCVS…VIVRKTRGDD (240 aa)). An intrachain disulfide couples Cys127 to Cys364. [4Fe-4S] cluster contacts are provided by Cys134, Cys138, and Cys141. Residues 188-189 (GE), Ser220, 242-244 (SLH), and Asn321 contribute to the S-adenosyl-L-methionine site. Cys364 functions as the S-methylcysteine intermediate in the catalytic mechanism.

Belongs to the radical SAM superfamily. RlmN family. [4Fe-4S] cluster serves as cofactor.

It is found in the cytoplasm. It carries out the reaction adenosine(2503) in 23S rRNA + 2 reduced [2Fe-2S]-[ferredoxin] + 2 S-adenosyl-L-methionine = 2-methyladenosine(2503) in 23S rRNA + 5'-deoxyadenosine + L-methionine + 2 oxidized [2Fe-2S]-[ferredoxin] + S-adenosyl-L-homocysteine. The enzyme catalyses adenosine(37) in tRNA + 2 reduced [2Fe-2S]-[ferredoxin] + 2 S-adenosyl-L-methionine = 2-methyladenosine(37) in tRNA + 5'-deoxyadenosine + L-methionine + 2 oxidized [2Fe-2S]-[ferredoxin] + S-adenosyl-L-homocysteine. Specifically methylates position 2 of adenine 2503 in 23S rRNA and position 2 of adenine 37 in tRNAs. m2A2503 modification seems to play a crucial role in the proofreading step occurring at the peptidyl transferase center and thus would serve to optimize ribosomal fidelity. The sequence is that of Dual-specificity RNA methyltransferase RlmN from Actinobacillus pleuropneumoniae serotype 5b (strain L20).